The following is a 102-amino-acid chain: NADH-quinone oxidoreductase subunit K 1 (102 aa).

Transmembrane regions (helical) follow at residues 5–25 (LYEV…CVVA), 30–50 (VIMM…TFVG), and 62–82 (VFSL…LAMV).

Belongs to the complex I subunit 4L family. In terms of assembly, NDH-1 is composed of 14 different subunits. Subunits NuoA, H, J, K, L, M, N constitute the membrane sector of the complex.

The protein localises to the cell inner membrane. It carries out the reaction a quinone + NADH + 5 H(+)(in) = a quinol + NAD(+) + 4 H(+)(out). Its function is as follows. NDH-1 shuttles electrons from NADH, via FMN and iron-sulfur (Fe-S) centers, to quinones in the respiratory chain. The immediate electron acceptor for the enzyme in this species is believed to be ubiquinone. Couples the redox reaction to proton translocation (for every two electrons transferred, four hydrogen ions are translocated across the cytoplasmic membrane), and thus conserves the redox energy in a proton gradient. The sequence is that of NADH-quinone oxidoreductase subunit K 1 from Geobacter sp. (strain M21).